Here is a 197-residue protein sequence, read N- to C-terminus: Phospholipid hydroperoxide glutathione peroxidase (197 aa).

Position 40 is a phosphoserine (serine 40). Selenocysteine 73 is a catalytic residue. Residue selenocysteine 73 is a non-standard amino acid, selenocysteine.

Belongs to the glutathione peroxidase family. As to quaternary structure, monomer. Has a tendency to form higher mass oligomers. Interacts with FUNDC1; this interaction promotes GPX4 recruitment into mitochondria through TOM/TIM complex where it is degraded by mitophagy.

Its subcellular location is the mitochondrion. The protein resides in the cytoplasm. It carries out the reaction a hydroperoxy polyunsaturated fatty acid + 2 glutathione = a hydroxy polyunsaturated fatty acid + glutathione disulfide + H2O. The enzyme catalyses 2 glutathione + H2O2 = glutathione disulfide + 2 H2O. The catalysed reaction is tert-butyl hydroperoxide + 2 glutathione = tert-butanol + glutathione disulfide + H2O. It catalyses the reaction cumene hydroperoxide + 2 glutathione = 2-phenylpropan-2-ol + glutathione disulfide + H2O. It carries out the reaction (9S)-hydroperoxy-(10E,12Z)-octadecadienoate + 2 glutathione = (9S)-hydroxy-(10E,12Z)-octadecadienoate + glutathione disulfide + H2O. The enzyme catalyses (13S)-hydroperoxy-(9Z,11E)-octadecadienoate + 2 glutathione = (13S)-hydroxy-(9Z,11E)-octadecadienoate + glutathione disulfide + H2O. The catalysed reaction is (5S)-hydroperoxy-(6E,8Z,11Z,14Z)-eicosatetraenoate + 2 glutathione = (5S)-hydroxy-(6E,8Z,11Z,14Z)-eicosatetraenoate + glutathione disulfide + H2O. It catalyses the reaction (12R)-hydroperoxy-(5Z,8Z,10E,14Z)-eicosatetraenoate + 2 glutathione = (12R)-hydroxy-(5Z,8Z,10E,14Z)-eicosatetraenoate + glutathione disulfide + H2O. It carries out the reaction (12S)-hydroperoxy-(5Z,8Z,10E,14Z)-eicosatetraenoate + 2 glutathione = (12S)-hydroxy-(5Z,8Z,10E,14Z)-eicosatetraenoate + glutathione disulfide + H2O. The enzyme catalyses (15S)-hydroperoxy-(5Z,8Z,11Z,13E)-eicosatetraenoate + 2 glutathione = (15S)-hydroxy-(5Z,8Z,11Z,13E)-eicosatetraenoate + glutathione disulfide + H2O. The catalysed reaction is (5S)-hydroperoxy-(6E,8Z,11Z,14Z,17Z)-eicosapentaenoate + 2 glutathione = (5S)-hydroxy-(6E,8Z,11Z,14Z,17Z)-eicosapentaenoate + glutathione disulfide + H2O. It catalyses the reaction (12S)-hydroperoxy-(5Z,8Z,10E,14Z,17Z)-eicosapentaenoate + 2 glutathione = (12S)-hydroxy-(5Z,8Z,10E,14Z,17Z)-eicosapentaenoate + glutathione disulfide + H2O. It carries out the reaction (15S)-hydroperoxy-(5Z,8Z,11Z,13E,17Z)-eicosapentaenoate + 2 glutathione = (15S)-hydroxy-(5Z,8Z,11Z,13E,17Z)-eicosapentaenoate + glutathione disulfide + H2O. The enzyme catalyses (15S)-hydroperoxy-(11Z,13E)-eicosadienoate + 2 glutathione = (15S)-hydroxy-(11Z,13E)-eicosadienoate + glutathione disulfide + H2O. The catalysed reaction is (17S)-hydroperoxy-(4Z,7Z,10Z,13Z,15E,19Z)-docosahexaenoate + 2 glutathione = (17S)-hydroxy-(4Z,7Z,10Z,13Z,15E,19Z)-docosahexaenoate + glutathione disulfide + H2O. It catalyses the reaction a hydroperoxy-1,2-diacyl-glycero-3-phosphocholine + 2 glutathione = a hydroxy-1,2-diacyl-glycero-3-phosphocholine + glutathione disulfide + H2O. Its function is as follows. Essential antioxidant peroxidase that directly reduces phospholipid hydroperoxide even if they are incorporated in membranes and lipoproteins. Can also reduce fatty acid hydroperoxide, cholesterol hydroperoxide and thymine hydroperoxide. Plays a key role in protecting cells from oxidative damage by preventing membrane lipid peroxidation. Required to prevent cells from ferroptosis, a non-apoptotic cell death resulting from an iron-dependent accumulation of lipid reactive oxygen species. The presence of selenocysteine (Sec) versus Cys at the active site is essential for life: it provides resistance to overoxidation and prevents cells against ferroptosis. The presence of Sec at the active site is also essential for the survival of a specific type of parvalbumin-positive interneurons, thereby preventing against fatal epileptic seizures. May be required to protect cells from the toxicity of ingested lipid hydroperoxides. Required for normal sperm development and male fertility. Essential for maturation and survival of photoreceptor cells. Plays a role in a primary T-cell response to viral and parasitic infection by protecting T-cells from ferroptosis and by supporting T-cell expansion. Plays a role of glutathione peroxidase in platelets in the arachidonic acid metabolism. Reduces hydroperoxy ester lipids formed by a 15-lipoxygenase that may play a role as down-regulator of the cellular 15-lipoxygenase pathway. Can also reduce small soluble hydroperoxides such as H2O2, cumene hydroperoxide and tert-butyl hydroperoxide. The polypeptide is Phospholipid hydroperoxide glutathione peroxidase (Hylobates lar (Lar gibbon)).